The primary structure comprises 306 residues: Ornithine carbamoyltransferase (306 aa).

Carbamoyl phosphate contacts are provided by residues 46–49, Q73, R97, and 124–127; these read STRT and HPTQ. L-ornithine is bound by residues N156, D220, and 224–225; that span reads SM. Carbamoyl phosphate-binding positions include 260–261 and R288; that span reads CL.

Belongs to the aspartate/ornithine carbamoyltransferase superfamily. OTCase family.

It is found in the cytoplasm. It catalyses the reaction carbamoyl phosphate + L-ornithine = L-citrulline + phosphate + H(+). It functions in the pathway amino-acid biosynthesis; L-arginine biosynthesis; L-arginine from L-ornithine and carbamoyl phosphate: step 1/3. Its function is as follows. Reversibly catalyzes the transfer of the carbamoyl group from carbamoyl phosphate (CP) to the N(epsilon) atom of ornithine (ORN) to produce L-citrulline. The protein is Ornithine carbamoyltransferase of Campylobacter jejuni subsp. jejuni serotype O:23/36 (strain 81-176).